We begin with the raw amino-acid sequence, 293 residues long: Elongation factor Ts (293 aa).

The involved in Mg(2+) ion dislocation from EF-Tu stretch occupies residues 80-83; it reads TDFV.

It belongs to the EF-Ts family.

It is found in the cytoplasm. Functionally, associates with the EF-Tu.GDP complex and induces the exchange of GDP to GTP. It remains bound to the aminoacyl-tRNA.EF-Tu.GTP complex up to the GTP hydrolysis stage on the ribosome. This Janthinobacterium sp. (strain Marseille) (Minibacterium massiliensis) protein is Elongation factor Ts.